Here is a 122-residue protein sequence, read N- to C-terminus: Large ribosomal subunit protein uL14 (122 aa).

It belongs to the universal ribosomal protein uL14 family. As to quaternary structure, part of the 50S ribosomal subunit. Forms a cluster with proteins L3 and L19. In the 70S ribosome, L14 and L19 interact and together make contacts with the 16S rRNA in bridges B5 and B8.

Functionally, binds to 23S rRNA. Forms part of two intersubunit bridges in the 70S ribosome. The protein is Large ribosomal subunit protein uL14 of Jannaschia sp. (strain CCS1).